The primary structure comprises 112 residues: C-C motif chemokine 27 (112 aa).

The first 24 residues, 1-24, serve as a signal peptide directing secretion; it reads MKGPPTFCSLLLLSLLLSPDPTAA. Cystine bridges form between C33-C62 and C34-C77.

Belongs to the intercrine beta (chemokine CC) family. Monomer, dimer, and tetramer. Heparin avidly promotes oligomerization. Interacts with TNFAIP6 (via Link domain). As to expression, testis, thymus, placenta, ovary and skin.

Its subcellular location is the secreted. Chemotactic factor that attracts skin-associated memory T-lymphocytes. May play a role in mediating homing of lymphocytes to cutaneous sites. Binds to CCR10. In Homo sapiens (Human), this protein is C-C motif chemokine 27 (CCL27).